The sequence spans 421 residues: Diaminopimelate decarboxylase (421 aa).

An N6-(pyridoxal phosphate)lysine modification is found at Lys63. Pyridoxal 5'-phosphate-binding positions include Gly242 and Glu278 to Arg281. Arg281, Arg317, and Tyr321 together coordinate substrate. Cys346 acts as the Proton donor in catalysis. The substrate site is built by Glu347 and Tyr375. Residue Tyr375 participates in pyridoxal 5'-phosphate binding.

It belongs to the Orn/Lys/Arg decarboxylase class-II family. LysA subfamily. As to quaternary structure, homodimer. It depends on pyridoxal 5'-phosphate as a cofactor.

It catalyses the reaction meso-2,6-diaminopimelate + H(+) = L-lysine + CO2. It functions in the pathway amino-acid biosynthesis; L-lysine biosynthesis via DAP pathway; L-lysine from DL-2,6-diaminopimelate: step 1/1. Functionally, specifically catalyzes the decarboxylation of meso-diaminopimelate (meso-DAP) to L-lysine. This is Diaminopimelate decarboxylase from Zymomonas mobilis subsp. mobilis (strain ATCC 31821 / ZM4 / CP4).